We begin with the raw amino-acid sequence, 407 residues long: Peptidase T (407 aa).

Residue His-82 participates in Zn(2+) binding. The active site involves Asp-84. Zn(2+) is bound at residue Asp-143. The Proton acceptor role is filled by Glu-177. Zn(2+)-binding residues include Glu-178, Asp-200, and His-382.

The protein belongs to the peptidase M20B family. Zn(2+) is required as a cofactor.

It is found in the cytoplasm. It catalyses the reaction Release of the N-terminal residue from a tripeptide.. Functionally, cleaves the N-terminal amino acid of tripeptides. This Streptococcus thermophilus (strain CNRZ 1066) protein is Peptidase T.